The primary structure comprises 233 residues: 7-cyano-7-deazaguanine synthase (233 aa).

7–17 (LSGGLDSLVTS) is a binding site for ATP. Zn(2+) contacts are provided by Cys195, Cys206, Cys209, and Cys212.

This sequence belongs to the QueC family. Zn(2+) serves as cofactor.

The catalysed reaction is 7-carboxy-7-deazaguanine + NH4(+) + ATP = 7-cyano-7-deazaguanine + ADP + phosphate + H2O + H(+). The protein operates within purine metabolism; 7-cyano-7-deazaguanine biosynthesis. In terms of biological role, catalyzes the ATP-dependent conversion of 7-carboxy-7-deazaguanine (CDG) to 7-cyano-7-deazaguanine (preQ(0)). The polypeptide is 7-cyano-7-deazaguanine synthase (Methanococcus vannielii (strain ATCC 35089 / DSM 1224 / JCM 13029 / OCM 148 / SB)).